The chain runs to 1138 residues: uncharacterized protein (1138 aa).

2 disordered regions span residues E985–E1015 and L1094–L1138. The span at D1110–L1138 shows a compositional bias: acidic residues.

This is an uncharacterized protein from Ostreid herpesvirus 1 (isolate France) (OsHV-1).